A 290-amino-acid chain; its full sequence is Bifunctional protein FolD (290 aa).

Residues 165–167 (GRS), serine 190, and isoleucine 231 each bind NADP(+).

This sequence belongs to the tetrahydrofolate dehydrogenase/cyclohydrolase family. As to quaternary structure, homodimer.

It carries out the reaction (6R)-5,10-methylene-5,6,7,8-tetrahydrofolate + NADP(+) = (6R)-5,10-methenyltetrahydrofolate + NADPH. It catalyses the reaction (6R)-5,10-methenyltetrahydrofolate + H2O = (6R)-10-formyltetrahydrofolate + H(+). The protein operates within one-carbon metabolism; tetrahydrofolate interconversion. Functionally, catalyzes the oxidation of 5,10-methylenetetrahydrofolate to 5,10-methenyltetrahydrofolate and then the hydrolysis of 5,10-methenyltetrahydrofolate to 10-formyltetrahydrofolate. The sequence is that of Bifunctional protein FolD from Aromatoleum aromaticum (strain DSM 19018 / LMG 30748 / EbN1) (Azoarcus sp. (strain EbN1)).